Here is a 944-residue protein sequence, read N- to C-terminus: UvrABC system protein A (944 aa).

31 to 38 (GLSGSGKS) lines the ATP pocket. Residues 253–280 (CPVCGHAISELEPKLFSFNNPAGACPTC) form a C4-type zinc finger. ABC transporter domains are found at residues 309–586 (WDRR…PDSL) and 606–936 (RNKK…HYLK). Residue 639–646 (GVSGSGKS) coordinates ATP. A C4-type zinc finger spans residues 739 to 765 (CEACQGDGLIKVEMHFLPDIYVPCDVC).

The protein belongs to the ABC transporter superfamily. UvrA family. As to quaternary structure, forms a heterotetramer with UvrB during the search for lesions.

The protein localises to the cytoplasm. In terms of biological role, the UvrABC repair system catalyzes the recognition and processing of DNA lesions. UvrA is an ATPase and a DNA-binding protein. A damage recognition complex composed of 2 UvrA and 2 UvrB subunits scans DNA for abnormalities. When the presence of a lesion has been verified by UvrB, the UvrA molecules dissociate. The chain is UvrABC system protein A from Pseudomonas putida (strain ATCC 47054 / DSM 6125 / CFBP 8728 / NCIMB 11950 / KT2440).